The following is a 674-amino-acid chain: Primary amine oxidase (674 aa).

Residues 1–25 (MASTTTMRLALFSVLTLLSFHAVVS) form the signal peptide. Residue N156 is glycosylated (N-linked (GlcNAc...) asparagine). Residues C162 and C183 are joined by a disulfide bond. Residues 226 to 236 (ENTEYQVSKQS) show a composition bias toward polar residues. The tract at residues 226 to 251 (ENTEYQVSKQSPPFGPKQHSLTSHQP) is disordered. Substrate is bound at residue 323-334 (FFDSGEFGFGLS). D325 (proton acceptor) is an active-site residue. C344 and C370 are oxidised to a cystine. N389 is a glycosylation site (N-linked (GlcNAc...) asparagine). 409-414 (VGNYDN) serves as a coordination point for substrate. Catalysis depends on Y412, which acts as the Schiff-base intermediate with substrate; via topaquinone. A 2',4',5'-topaquinone modification is found at Y412. Cu cation-binding residues include H467 and H469. Mn(2+)-binding residues include D476, F477, D478, D617, and I618. H628 is a Cu cation binding site.

This sequence belongs to the copper/topaquinone oxidase family. As to quaternary structure, homodimer. Requires Cu cation as cofactor. It depends on Mn(2+) as a cofactor. The cofactor is L-topaquinone. Topaquinone (TPQ) is generated by copper-dependent autoxidation of a specific tyrosyl residue.

The catalysed reaction is a primary methyl amine + O2 + H2O = an aldehyde + H2O2 + NH4(+). The protein is Primary amine oxidase of Pisum sativum (Garden pea).